We begin with the raw amino-acid sequence, 253 residues long: 4-hydroxy-tetrahydrodipicolinate reductase (253 aa).

NAD(+) contacts are provided by residues 8–13 (GAKGRM), aspartate 34, 76–78 (GTT), and 108–111 (APNF). The Proton donor/acceptor role is filled by histidine 138. Residue histidine 139 coordinates (S)-2,3,4,5-tetrahydrodipicolinate. The Proton donor role is filled by lysine 142. 148 to 149 (GT) serves as a coordination point for (S)-2,3,4,5-tetrahydrodipicolinate.

It belongs to the DapB family.

The protein resides in the cytoplasm. It catalyses the reaction (S)-2,3,4,5-tetrahydrodipicolinate + NAD(+) + H2O = (2S,4S)-4-hydroxy-2,3,4,5-tetrahydrodipicolinate + NADH + H(+). It carries out the reaction (S)-2,3,4,5-tetrahydrodipicolinate + NADP(+) + H2O = (2S,4S)-4-hydroxy-2,3,4,5-tetrahydrodipicolinate + NADPH + H(+). It participates in amino-acid biosynthesis; L-lysine biosynthesis via DAP pathway; (S)-tetrahydrodipicolinate from L-aspartate: step 4/4. Its function is as follows. Catalyzes the conversion of 4-hydroxy-tetrahydrodipicolinate (HTPA) to tetrahydrodipicolinate. The sequence is that of 4-hydroxy-tetrahydrodipicolinate reductase from Bifidobacterium animalis subsp. lactis (strain AD011).